Reading from the N-terminus, the 271-residue chain is Putative phosphoenolpyruvate synthase regulatory protein (271 aa).

An ADP-binding site is contributed by 152-159 (GVSRSGKT).

It belongs to the pyruvate, phosphate/water dikinase regulatory protein family. PSRP subfamily.

The catalysed reaction is [pyruvate, water dikinase] + ADP = [pyruvate, water dikinase]-phosphate + AMP + H(+). It catalyses the reaction [pyruvate, water dikinase]-phosphate + phosphate + H(+) = [pyruvate, water dikinase] + diphosphate. Bifunctional serine/threonine kinase and phosphorylase involved in the regulation of the phosphoenolpyruvate synthase (PEPS) by catalyzing its phosphorylation/dephosphorylation. The chain is Putative phosphoenolpyruvate synthase regulatory protein from Dichelobacter nodosus (strain VCS1703A).